The sequence spans 317 residues: Xylose/arabinose import permease protein XacH (317 aa).

Helical transmembrane passes span 40–60 (GIPFVLMSIAVYGGTGYNFAI), 98–118 (LVLLVGFTTICLVLGLFLAIL), 132–152 (VYLLPMSLSFVVTAQLWLWMF), 179–199 (IALGAVILALIWQFSGYTMVV), 241–261 (AAVVLMVFALKAFTFLYALVG), and 290–310 (AAIATMLLIMALGVIGPYLYY). The ABC transmembrane type-1 domain occupies 94–309 (AQNNLVLLVG…ALGVIGPYLY (216 aa)).

This sequence belongs to the binding-protein-dependent transport system permease family. The complex is composed of two ATP-binding proteins (XacJ and XacK), two transmembrane proteins (XacH and XacI) and a solute-binding protein (XacG).

It localises to the cell membrane. In terms of biological role, part of the ABC transporter complex XacGHIJK involved in the uptake of xylose and arabinose. Responsible for the translocation of the substrate across the membrane. The chain is Xylose/arabinose import permease protein XacH from Haloferax volcanii (strain ATCC 29605 / DSM 3757 / JCM 8879 / NBRC 14742 / NCIMB 2012 / VKM B-1768 / DS2) (Halobacterium volcanii).